The chain runs to 227 residues: ATP synthase F(0) complex subunit a (227 aa).

6 consecutive transmembrane segments (helical) span residues 14–34 (LFGI…FPAP), 69–89 (WGPY…LGLL), 98–118 (QLSV…IIGL), 132–152 (EGTP…SLFI), 180–200 (FVLL…LFLL), and 202–222 (LLEV…LSLY).

The protein belongs to the ATPase A chain family. In terms of assembly, component of the ATP synthase complex composed at least of ATP5F1A/subunit alpha, ATP5F1B/subunit beta, ATP5MC1/subunit c (homooctomer), MT-ATP6/subunit a, MT-ATP8/subunit 8, ATP5ME/subunit e, ATP5MF/subunit f, ATP5MG/subunit g, ATP5MK/subunit k, ATP5MJ/subunit j, ATP5F1C/subunit gamma, ATP5F1D/subunit delta, ATP5F1E/subunit epsilon, ATP5PF/subunit F6, ATP5PB/subunit b, ATP5PD/subunit d, ATP5PO/subunit OSCP. ATP synthase complex consists of a soluble F(1) head domain (subunits alpha(3) and beta(3)) - the catalytic core - and a membrane F(0) domain - the membrane proton channel (subunits c, a, 8, e, f, g, k and j). These two domains are linked by a central stalk (subunits gamma, delta, and epsilon) rotating inside the F1 region and a stationary peripheral stalk (subunits F6, b, d, and OSCP). Interacts with DNAJC30; interaction is direct.

It localises to the mitochondrion inner membrane. It catalyses the reaction H(+)(in) = H(+)(out). In terms of biological role, subunit a, of the mitochondrial membrane ATP synthase complex (F(1)F(0) ATP synthase or Complex V) that produces ATP from ADP in the presence of a proton gradient across the membrane which is generated by electron transport complexes of the respiratory chain. ATP synthase complex consist of a soluble F(1) head domain - the catalytic core - and a membrane F(1) domain - the membrane proton channel. These two domains are linked by a central stalk rotating inside the F(1) region and a stationary peripheral stalk. During catalysis, ATP synthesis in the catalytic domain of F(1) is coupled via a rotary mechanism of the central stalk subunits to proton translocation. With the subunit c (ATP5MC1), forms the proton-conducting channel in the F(0) domain, that contains two crucial half-channels (inlet and outlet) that facilitate proton movement from the mitochondrial intermembrane space (IMS) into the matrix. Protons are taken up via the inlet half-channel and released through the outlet half-channel, following a Grotthuss mechanism. The protein is ATP synthase F(0) complex subunit a of Tetraodon nigroviridis (Spotted green pufferfish).